Reading from the N-terminus, the 36-residue chain is U-limacoditoxin(7)-Dv63 (36 aa).

The signal sequence occupies residues 1-19 (MFKPRVILLITIIAVFSEF).

The protein belongs to the limacoditoxin-7 family. As to expression, expressed by the venom secretory cell of the spine. The spine is a cuticular structure containing a single large nucleated venom-secreting cell at its base. It is an independent unit capable of producing, storing and injecting venom. On the back of D.vulnerans caterpillars, spines are grouped together by 50 to 100 to form scoli, of which there are eight in D.vulnerans.

It is found in the secreted. Its function is as follows. Peptide with insecticidal and antiparasitic activities. Induces irreversible paralysis in D.melanogaster when tested at high doses. It shows a moderate antiparasitic activity against the major pathogenic nematode of ruminants (H.contortus, EC(50)=41.3 uM). Does not show antimicrobial activities. Does not induce increase in intracellular calcium in mouse DRG neurons, suggesting that it does not induce pain. This chain is U-limacoditoxin(7)-Dv63, found in Doratifera vulnerans (Mottled cup moth).